Reading from the N-terminus, the 181-residue chain is TATA-box-binding protein (181 aa).

Tandem repeats lie at residues 7-83 (IVNV…MEYL) and 98-173 (VQNM…KNTV).

This sequence belongs to the TBP family.

In terms of biological role, general factor that plays a role in the activation of archaeal genes transcribed by RNA polymerase. Binds specifically to the TATA box promoter element which lies close to the position of transcription initiation. The protein is TATA-box-binding protein of Methanococcus aeolicus (strain ATCC BAA-1280 / DSM 17508 / OCM 812 / Nankai-3).